A 664-amino-acid chain; its full sequence is Protein-arginine deiminase type-3 (664 aa).

The protein belongs to the protein arginine deiminase family. Ca(2+) is required as a cofactor. As to expression, epidermis and hair follicles.

It is found in the cytoplasm. It catalyses the reaction L-arginyl-[protein] + H2O = L-citrullyl-[protein] + NH4(+). Catalyzes the deimination of arginine residues of proteins. The polypeptide is Protein-arginine deiminase type-3 (Padi3) (Rattus norvegicus (Rat)).